Here is a 450-residue protein sequence, read N- to C-terminus: Saccharopine dehydrogenase [NADP(+), L-glutamate-forming] (450 aa).

NADP(+) is bound by residues 11–14 (SGFV), 33–35 (CRT), 55–56 (DV), isoleucine 76, 98–99 (TS), 125–127 (LDP), and serine 175. Residues 99 to 100 (SY) and aspartate 126 contribute to the L-saccharopine site. L-saccharopine-binding positions include arginine 224 and 245 to 247 (TLR).

The protein belongs to the saccharopine dehydrogenase family. As to quaternary structure, homodimer.

It catalyses the reaction L-saccharopine + NADP(+) + H2O = (S)-2-amino-6-oxohexanoate + L-glutamate + NADPH + H(+). The protein operates within amino-acid biosynthesis; L-lysine biosynthesis via AAA pathway; L-lysine from L-alpha-aminoadipate (fungal route): step 2/3. This is Saccharopine dehydrogenase [NADP(+), L-glutamate-forming] (LYS3) from Pyricularia oryzae (strain 70-15 / ATCC MYA-4617 / FGSC 8958) (Rice blast fungus).